The primary structure comprises 199 residues: MACNAPNQRQRTLSTSGESLYEILGLHKGASCEEIKKTYRKLALRHHPDKNPDDPSAAEKFKEINNAHTILTDTSKRNIYDKYGSLGLYVAEQFGDENVNTYFMLSSWWAKTLFIIIGLLTGCYFCCCLCCCCNCCCGHCRPKSSTPEEEFYVSPEDLEEQIRTDMEKDMDFPVVLQPTNTNEKTQLIREGSRSYCTDS.

Phosphoserine occurs at positions 14 and 16. One can recognise a J domain in the interval 19-84; that stretch reads SLYEILGLHK…SKRNIYDKYG (66 aa).

As to quaternary structure, interacts with the chaperone complex consisting of HSC70 and SGTA. In terms of processing, palmitoylated.

Its subcellular location is the membrane. The sequence is that of DnaJ homolog subfamily C member 5B (Dnajc5b) from Mus musculus (Mouse).